Reading from the N-terminus, the 359-residue chain is Norspermidine sensor (359 aa).

A signal peptide spans 1–33; that stretch reads MTNFCNEWVSYSQMIKRFLSLMVLNTVCYQASA.

Belongs to the bacterial solute-binding protein PotD/PotF family.

The protein resides in the periplasm. Acts as a sensor of norspermidine and enhances biofilm formation. When complexed to norspermidine, could interact with the periplasmic portion of MbaA to regulate its enzymatic activity. The chain is Norspermidine sensor (nspS) from Vibrio cholerae serotype O1 (strain ATCC 39315 / El Tor Inaba N16961).